We begin with the raw amino-acid sequence, 397 residues long: MAMIELEFGRQNFHPLKKKSPLLLKLIAVVFAVLLFCEFLIYYLAIFQCNWPEVKTTASDGEQATREPVLKAMFLADTHLLGEVLGHWPDKLRREWQMERAFQTALWLLQPEVVFILGDIFDEGKWSTPEAWVNDVERFQKMFRHPSHVQLKVVAGNHDIGFHYEMNTYKVERFEKVFSSERLFSWKGINFVMVNSVALNGDGCGICSETEAELIEVSHRLNCSREQARGSSRCGPGPLLPMSAPVLLQHYPLYRRSDANCSGEDAAPPEERDIPFKENYDVLSREASQKLLRWFQPRLVLSGHTHSACEVHHGGRVPELSVPSFSWRNRNNPSFIMGSITPTDYTLSKCYLPREDVVLIIYCGMVGFLVVLTLTHFGLLASPFLAGLNLLRKRKTR.

A helical membrane pass occupies residues Ile-27–Phe-47. Residues Asp-77, Asp-119, Asn-157, His-250, His-304, and His-306 each contribute to the a divalent metal cation site. The chain crosses the membrane as a helical span at residues Val-357–Phe-377. Positions Lys-393–Arg-397 match the Di-lysine motif motif.

Belongs to the metallophosphoesterase superfamily. MPPE1 family. As to quaternary structure, interacts with GPI-anchor proteins (via the GPI portion). Interacts with TMED10. Requires Mn(2+) as cofactor.

Its subcellular location is the endoplasmic reticulum-Golgi intermediate compartment membrane. In terms of biological role, metallophosphoesterase that catalyzes the removal of a side-chain ethanolamine-phosphate (EtNP) from the second mannose of the GPI-anchor protein intermediate. Participates in the glycan remodeling steps of GPI-anchor maturation to allow an efficient transport of GPI-anchor proteins from the endoplasmic reticulum to the Golgi. The sequence is that of Metallophosphoesterase 1 from Pongo abelii (Sumatran orangutan).